Consider the following 360-residue polypeptide: MLTLSDFDFDLPPELIAQTALPERSASRLLEVDNTNPSAPPRLVDRRFAELPACVAPGDLLVFNDTKVLKARFFGRKASGGKIEVLIERVTGERTALAQIRASKSPPPGTTLTLADAFDVTVGERVEPFFTLHFPDDCLVLIERHGRLPLPPYIEHAPDAADETRYQTVFAANPGAVAAPTAGLHFDDAVLTALEARGVERATLTLHVGAGTFQPVRVENLAEHRMHSESYELTDALVEKIAATRARGGRVIAVGTTSMRALEAAARDAQAAGRPLAATRAETDIFITPGYRFRVVDRLVTNFHLPKSTLLMLVSAFAGIETIRAAYRHAIDARYRFFSYGDAMLLTRRDDAAEATHGGA.

Belongs to the QueA family. Monomer.

It localises to the cytoplasm. The catalysed reaction is 7-aminomethyl-7-carbaguanosine(34) in tRNA + S-adenosyl-L-methionine = epoxyqueuosine(34) in tRNA + adenine + L-methionine + 2 H(+). Its pathway is tRNA modification; tRNA-queuosine biosynthesis. Transfers and isomerizes the ribose moiety from AdoMet to the 7-aminomethyl group of 7-deazaguanine (preQ1-tRNA) to give epoxyqueuosine (oQ-tRNA). This is S-adenosylmethionine:tRNA ribosyltransferase-isomerase from Burkholderia pseudomallei (strain K96243).